The chain runs to 122 residues: Large ribosomal subunit protein uL14c (122 aa).

It belongs to the universal ribosomal protein uL14 family. As to quaternary structure, part of the 50S ribosomal subunit.

Its subcellular location is the plastid. The protein localises to the chloroplast. Binds to 23S rRNA. The sequence is that of Large ribosomal subunit protein uL14c from Porphyra purpurea (Red seaweed).